A 102-amino-acid chain; its full sequence is NADH-quinone oxidoreductase subunit K (102 aa).

A run of 3 helical transmembrane segments spans residues 6-26, 30-50, and 62-82; these read LEHG…GVMV, LLFM…AFVL, and IMFI…LAIV.

This sequence belongs to the complex I subunit 4L family. In terms of assembly, NDH-1 is composed of 14 different subunits. Subunits NuoA, H, J, K, L, M, N constitute the membrane sector of the complex.

The protein resides in the cell inner membrane. The enzyme catalyses a quinone + NADH + 5 H(+)(in) = a quinol + NAD(+) + 4 H(+)(out). In terms of biological role, NDH-1 shuttles electrons from NADH, via FMN and iron-sulfur (Fe-S) centers, to quinones in the respiratory chain. The immediate electron acceptor for the enzyme in this species is believed to be ubiquinone. Couples the redox reaction to proton translocation (for every two electrons transferred, four hydrogen ions are translocated across the cytoplasmic membrane), and thus conserves the redox energy in a proton gradient. This Acinetobacter baylyi (strain ATCC 33305 / BD413 / ADP1) protein is NADH-quinone oxidoreductase subunit K.